The sequence spans 160 residues: Regulatory protein RecX (160 aa).

This sequence belongs to the RecX family.

The protein resides in the cytoplasm. Modulates RecA activity. This is Regulatory protein RecX from Xanthomonas oryzae pv. oryzae (strain MAFF 311018).